The primary structure comprises 395 residues: Chalcone synthase (395 aa).

Residue C164 is part of the active site.

The protein belongs to the thiolase-like superfamily. Chalcone/stilbene synthases family.

It carries out the reaction (E)-4-coumaroyl-CoA + 3 malonyl-CoA + 3 H(+) = 2',4,4',6'-tetrahydroxychalcone + 3 CO2 + 4 CoA. It participates in secondary metabolite biosynthesis; flavonoid biosynthesis. Its function is as follows. The primary product of this enzyme is 4,2',4',6'-tetrahydroxychalcone (also termed naringenin-chalcone or chalcone) which can under specific conditions spontaneously isomerize into naringenin. This Betula pendula (European white birch) protein is Chalcone synthase (CHS).